Here is a 216-residue protein sequence, read N- to C-terminus: Adenylate kinase (216 aa).

10 to 15 (GAGKGT) contributes to the ATP binding site. The interval 30 to 59 (STGDMFRAAMKNETALGLEAKSYIDKGELV) is NMP. Residues threonine 31, arginine 36, 57-59 (ELV), 85-88 (GFPR), and glutamine 92 contribute to the AMP site. An LID region spans residues 126 to 164 (GRFICRTCGATYHKLFNPPKVEGTCDRCGGHEFYQREDD). An ATP-binding site is contributed by arginine 127. Positions 130 and 133 each coordinate Zn(2+). Residue 136–137 (TY) coordinates ATP. Residues cysteine 150 and cysteine 153 each contribute to the Zn(2+) site. The AMP site is built by arginine 161 and arginine 172. Residue arginine 200 coordinates ATP.

Belongs to the adenylate kinase family. Monomer.

It is found in the cytoplasm. It carries out the reaction AMP + ATP = 2 ADP. It functions in the pathway purine metabolism; AMP biosynthesis via salvage pathway; AMP from ADP: step 1/1. Its function is as follows. Catalyzes the reversible transfer of the terminal phosphate group between ATP and AMP. Plays an important role in cellular energy homeostasis and in adenine nucleotide metabolism. In Enterococcus faecalis (strain ATCC 700802 / V583), this protein is Adenylate kinase.